The chain runs to 207 residues: NADH-quinone oxidoreductase chain 5 (207 aa).

Belongs to the complex I 30 kDa subunit family. In terms of assembly, NDH-1 is composed of at least 14 different subunits, Nqo1 to Nqo14. The complex has a L-shaped structure, with the hydrophobic arm (subunits Nqo7, Nqo8, Nqo10 to Nqo14) embedded in the inner membrane and the hydrophilic peripheral arm (subunits Nqo1 to Nqo6, Nqo9) protruding into the bacterial cytoplasm. The hydrophilic domain contains all the redox centers.

Its subcellular location is the cell inner membrane. It catalyses the reaction a quinone + NADH + 5 H(+)(in) = a quinol + NAD(+) + 4 H(+)(out). NDH-1 shuttles electrons from NADH, via FMN and iron-sulfur (Fe-S) centers, to quinones in the respiratory chain. The immediate electron acceptor for the enzyme in this species is believed to be ubiquinone. Couples the redox reaction to proton translocation (for every two electrons transferred, four hydrogen ions are translocated across the cytoplasmic membrane), and thus conserves the redox energy in a proton gradient. The protein is NADH-quinone oxidoreductase chain 5 (nqo5) of Paracoccus denitrificans.